A 383-amino-acid chain; its full sequence is Histidine decarboxylase (383 aa).

A substrate-binding site is contributed by histidine 120. Lysine 233 is subject to N6-(pyridoxal phosphate)lysine.

The protein belongs to the group II decarboxylase family. Homotetramer. Pyridoxal 5'-phosphate serves as cofactor.

The enzyme catalyses L-histidine + H(+) = histamine + CO2. The protein is Histidine decarboxylase of Acinetobacter baumannii (strain AB307-0294).